Reading from the N-terminus, the 550-residue chain is Dihydroxy-acid dehydratase (550 aa).

Residue Asp-81 participates in Mg(2+) binding. Cys-122 contributes to the [2Fe-2S] cluster binding site. 2 residues coordinate Mg(2+): Asp-123 and Lys-124. Residue Lys-124 is modified to N6-carboxylysine. A [2Fe-2S] cluster-binding site is contributed by Cys-194. Residue Glu-442 participates in Mg(2+) binding. The active-site Proton acceptor is the Ser-467.

The protein belongs to the IlvD/Edd family. Homodimer. [2Fe-2S] cluster is required as a cofactor. Requires Mg(2+) as cofactor.

It catalyses the reaction (2R)-2,3-dihydroxy-3-methylbutanoate = 3-methyl-2-oxobutanoate + H2O. It carries out the reaction (2R,3R)-2,3-dihydroxy-3-methylpentanoate = (S)-3-methyl-2-oxopentanoate + H2O. It functions in the pathway amino-acid biosynthesis; L-isoleucine biosynthesis; L-isoleucine from 2-oxobutanoate: step 3/4. It participates in amino-acid biosynthesis; L-valine biosynthesis; L-valine from pyruvate: step 3/4. In terms of biological role, functions in the biosynthesis of branched-chain amino acids. Catalyzes the dehydration of (2R,3R)-2,3-dihydroxy-3-methylpentanoate (2,3-dihydroxy-3-methylvalerate) into 2-oxo-3-methylpentanoate (2-oxo-3-methylvalerate) and of (2R)-2,3-dihydroxy-3-methylbutanoate (2,3-dihydroxyisovalerate) into 2-oxo-3-methylbutanoate (2-oxoisovalerate), the penultimate precursor to L-isoleucine and L-valine, respectively. In Methanoregula boonei (strain DSM 21154 / JCM 14090 / 6A8), this protein is Dihydroxy-acid dehydratase.